A 263-amino-acid polypeptide reads, in one-letter code: MRRQEAGTSSLATRVGPEVLTTAAVASVTGCDDPLAAVLLGRPKVIEVLQRSAELIDRVPALAAAHHQIADYHAMRSRFFDAYLADAAAEGIRQCVVLAAGLDTRAFRLPWPDGMTVFEIDQPTVLRYKENALTAHGARPAADWHPVGVESDMPWPRRLWESGFNHNEPTIWLAEGLLPLPDATQDALISEIDGLSAAGSRIAFDDVLGMCSGRSDAPGWLTSRGWWTDVVEARHLPELSGRRDDDAQSYTAHAALVTAEKIA.

S-adenosyl-L-methionine is bound by residues Asp121 and 150–151; that span reads ES.

Belongs to the UPF0677 family.

Exhibits S-adenosyl-L-methionine-dependent methyltransferase activity. The sequence is that of Putative S-adenosyl-L-methionine-dependent methyltransferase Mkms_0098 from Mycobacterium sp. (strain KMS).